The sequence spans 423 residues: Histidine--tRNA ligase (423 aa).

It belongs to the class-II aminoacyl-tRNA synthetase family. In terms of assembly, homodimer.

The protein resides in the cytoplasm. It carries out the reaction tRNA(His) + L-histidine + ATP = L-histidyl-tRNA(His) + AMP + diphosphate + H(+). The protein is Histidine--tRNA ligase of Actinobacillus pleuropneumoniae serotype 7 (strain AP76).